A 947-amino-acid polypeptide reads, in one-letter code: Bifunctional glutamine synthetase adenylyltransferase/adenylyl-removing enzyme (947 aa).

The interval 1 to 440 (MTPLSSPLSQ…VFNELIGDDE (440 aa)) is adenylyl removase. The segment at 450-947 (SEPWREVWQD…ASWRKWLVAV (498 aa)) is adenylyl transferase.

Belongs to the GlnE family. Requires Mg(2+) as cofactor.

The catalysed reaction is [glutamine synthetase]-O(4)-(5'-adenylyl)-L-tyrosine + phosphate = [glutamine synthetase]-L-tyrosine + ADP. It catalyses the reaction [glutamine synthetase]-L-tyrosine + ATP = [glutamine synthetase]-O(4)-(5'-adenylyl)-L-tyrosine + diphosphate. In terms of biological role, involved in the regulation of glutamine synthetase GlnA, a key enzyme in the process to assimilate ammonia. When cellular nitrogen levels are high, the C-terminal adenylyl transferase (AT) inactivates GlnA by covalent transfer of an adenylyl group from ATP to specific tyrosine residue of GlnA, thus reducing its activity. Conversely, when nitrogen levels are low, the N-terminal adenylyl removase (AR) activates GlnA by removing the adenylyl group by phosphorolysis, increasing its activity. The regulatory region of GlnE binds the signal transduction protein PII (GlnB) which indicates the nitrogen status of the cell. The protein is Bifunctional glutamine synthetase adenylyltransferase/adenylyl-removing enzyme of Salmonella paratyphi A (strain ATCC 9150 / SARB42).